The chain runs to 283 residues: Poly(3-hydroxyalkanoate) depolymerase (283 aa).

An AB hydrolase-1 domain is found at 30–253 (PLLIFNGIGA…IDDGHLFLIT (224 aa)). Serine 102 (charge relay system) is an active-site residue.

The protein belongs to the AB hydrolase superfamily. Lipase family.

Functionally, complements a mutant that does not degrade PHA; might be a lipase. This Ectopseudomonas oleovorans (Pseudomonas oleovorans) protein is Poly(3-hydroxyalkanoate) depolymerase.